We begin with the raw amino-acid sequence, 182 residues long: Adenylate kinase (182 aa).

Residue 12-17 (GAGKGT) coordinates ATP. The interval 32-61 (STGDLLRAEVGAKTPLGQEAAAVMNRGELV) is NMP. Residues threonine 33, arginine 38, 59-61 (ELV), 85-88 (GFPR), and glutamine 92 each bind AMP. The LID stretch occupies residues 126-132 (SRGRSDD). Arginine 127 is a binding site for ATP. Positions 129 and 140 each coordinate AMP. Glycine 168 contacts ATP.

The protein belongs to the adenylate kinase family. As to quaternary structure, monomer.

Its subcellular location is the cytoplasm. It catalyses the reaction AMP + ATP = 2 ADP. The protein operates within purine metabolism; AMP biosynthesis via salvage pathway; AMP from ADP: step 1/1. Catalyzes the reversible transfer of the terminal phosphate group between ATP and AMP. Plays an important role in cellular energy homeostasis and in adenine nucleotide metabolism. This chain is Adenylate kinase, found in Prochlorococcus marinus (strain MIT 9303).